The following is a 207-amino-acid chain: Gene 66 protein (207 aa).

In Mycobacterium (Mycobacteriophage L5), this protein is Gene 66 protein (66).